A 532-amino-acid chain; its full sequence is Drimenyl diphosphate synthase (532 aa).

(2E,6E)-farnesyl diphosphate is bound by residues Arg121, Lys122, Gln152, and Trp154. Residue Glu158 coordinates Mg(2+). PFTB repeat units lie at residues 275–317, 325–367, 428–469, and 475–518; these read PAAM…RVAG, IAAA…APNP, KRQA…SRDG, and LARA…CVLL. Residue Asp304 is the Proton donor of the active site. Arg502 lines the (2E,6E)-farnesyl diphosphate pocket.

This sequence belongs to the terpene cyclase/mutase family. The cofactor is Mg(2+). Ni(2+) is required as a cofactor. Requires Co(2+) as cofactor.

The catalysed reaction is (2E,6E)-farnesyl diphosphate = (5S,9S,10S)-drim-7-en-11-yl diphosphate. In terms of biological role, catalyzes the cyclization of farnesyl diphosphate (FPP) to drimenyl diphosphate. The protein is Drimenyl diphosphate synthase of Streptantibioticus cattleyicolor (strain ATCC 35852 / DSM 46488 / JCM 4925 / NBRC 14057 / NRRL 8057) (Streptomyces cattleya).